A 119-amino-acid polypeptide reads, in one-letter code: Fluoride-specific ion channel FluC (119 aa).

A run of 4 helical transmembrane segments spans residues 5 to 25 (IIPL…LNLA), 34 to 54 (TGNL…AETI), 59 to 79 (WKLL…GFSL), and 97 to 117 (IFLH…IGAA). 2 residues coordinate Na(+): G69 and T72.

Belongs to the fluoride channel Fluc/FEX (TC 1.A.43) family.

The protein localises to the cell inner membrane. The catalysed reaction is fluoride(in) = fluoride(out). Na(+) is not transported, but it plays an essential structural role and its presence is essential for fluoride channel function. Functionally, fluoride-specific ion channel. Important for reducing fluoride concentration in the cell, thus reducing its toxicity. This Neisseria meningitidis serogroup C / serotype 2a (strain ATCC 700532 / DSM 15464 / FAM18) protein is Fluoride-specific ion channel FluC.